Reading from the N-terminus, the 620-residue chain is Carotenoid isomerooxygenase (620 aa).

Fe cation is bound by residues H211, H267, and H337. The segment at 440 to 459 (NGKQATAGEESPKRDAKRGR) is disordered. Residues 449–459 (ESPKRDAKRGR) show a composition bias toward basic and acidic residues. Fe cation is bound at residue H612.

This sequence belongs to the carotenoid oxygenase family. It depends on Fe(2+) as a cofactor. In terms of tissue distribution, expression follows organogenesis of the larval Bolwig's organ (BO), which mediates larval photophobic behavior. In the adult, expression is restricted exclusively to the brain. Expressed in both neuronal cells and glia cells. Not active within photoreceptors. Active within neuronal cells within the central nervous system.

The enzyme catalyses all-trans-zeaxanthin + O2 = (3R)-11-cis-3-hydroxyretinal + (3R)-all-trans-3-hydroxyretinal. The protein operates within cofactor metabolism; retinol metabolism. Its function is as follows. Catalyzes the oxidative cleavage at the 15,15'-double bond of carotenoids and the simultaneous all-trans to 11-cis isomerization of one cleavage product. Carotenoids like 11-cis retinal can promote visual pigment biogenesis in the dark. Essential for the biosynthesis of the 3-hydroxyretinal chromophore of rhodopsin from zeaxanthin and for proper photoreceptor development. Also essential for larval light perception. This is Carotenoid isomerooxygenase (ninaB) from Drosophila melanogaster (Fruit fly).